The following is a 238-amino-acid chain: Large ribosomal subunit protein bL25 (238 aa).

The span at 1–10 (MATTVKELKA) shows a compositional bias: basic and acidic residues. The tract at residues 1–24 (MATTVKELKATARPKSGKGAARAE) is disordered.

This sequence belongs to the bacterial ribosomal protein bL25 family. CTC subfamily. In terms of assembly, part of the 50S ribosomal subunit; part of the 5S rRNA/L5/L18/L25 subcomplex. Contacts the 5S rRNA. Binds to the 5S rRNA independently of L5 and L18.

This is one of the proteins that binds to the 5S RNA in the ribosome where it forms part of the central protuberance. The chain is Large ribosomal subunit protein bL25 from Bradyrhizobium diazoefficiens (strain JCM 10833 / BCRC 13528 / IAM 13628 / NBRC 14792 / USDA 110).